The chain runs to 209 residues: Uracil phosphoribosyltransferase (209 aa).

Residues Arg79, Arg104, and 131 to 139 (DPMLATGGS) contribute to the 5-phospho-alpha-D-ribose 1-diphosphate site. Uracil-binding positions include Ile194 and 199–201 (GDA). Position 200 (Asp200) interacts with 5-phospho-alpha-D-ribose 1-diphosphate.

Belongs to the UPRTase family. The cofactor is Mg(2+).

The enzyme catalyses UMP + diphosphate = 5-phospho-alpha-D-ribose 1-diphosphate + uracil. It participates in pyrimidine metabolism; UMP biosynthesis via salvage pathway; UMP from uracil: step 1/1. Its activity is regulated as follows. Allosterically activated by GTP. Its function is as follows. Catalyzes the conversion of uracil and 5-phospho-alpha-D-ribose 1-diphosphate (PRPP) to UMP and diphosphate. This Symbiobacterium thermophilum (strain DSM 24528 / JCM 14929 / IAM 14863 / T) protein is Uracil phosphoribosyltransferase.